A 447-amino-acid polypeptide reads, in one-letter code: Argininosuccinate synthase (447 aa).

ATP is bound by residues 17–25 (AFSGGLDTS) and A43. Y99 contributes to the L-citrulline binding site. Positions 129 and 131 each coordinate ATP. 3 residues coordinate L-aspartate: T131, N135, and D136. L-citrulline is bound at residue N135. Residue D136 coordinates ATP. The L-citrulline site is built by R139 and S192. D194 provides a ligand contact to ATP. The L-citrulline site is built by T201, E203, and E280.

The protein belongs to the argininosuccinate synthase family. Type 2 subfamily. As to quaternary structure, homotetramer.

The protein localises to the cytoplasm. It catalyses the reaction L-citrulline + L-aspartate + ATP = 2-(N(omega)-L-arginino)succinate + AMP + diphosphate + H(+). It functions in the pathway amino-acid biosynthesis; L-arginine biosynthesis; L-arginine from L-ornithine and carbamoyl phosphate: step 2/3. In Citrobacter koseri (strain ATCC BAA-895 / CDC 4225-83 / SGSC4696), this protein is Argininosuccinate synthase.